A 525-amino-acid chain; its full sequence is Beta-1,4-xylosyltransferase IRX14 (525 aa).

At 1 to 35 (MKLSALHQSYLNRRSNSFRSPTSLDSSVDGSGKSL) the chain is on the cytoplasmic side. A helical; Signal-anchor for type II membrane protein transmembrane segment spans residues 36 to 56 (IAVFWLILHCLCCLISLVLGF). Over 57–525 (RFSRLVFFFL…SSSSKHQERN (469 aa)) the chain is Lumenal. Residues asparagine 102, asparagine 204, and asparagine 326 are each glycosylated (N-linked (GlcNAc...) asparagine). A disordered region spans residues 452–525 (RTPWPDVPPE…SSSSKHQERN (74 aa)). The span at 471–488 (PLSQGNTVVVIPKQQQHP) shows a compositional bias: polar residues. The segment covering 489-503 (TKIRKPKRKSKKSKH) has biased composition (basic residues). Over residues 508 to 519 (TDTTTQVYSSSS) the composition is skewed to polar residues.

This sequence belongs to the glycosyltransferase 43 family. Expressed in developing interfascicular fibers and xylem cells in stems and developing secondary xylem in roots.

It localises to the golgi apparatus membrane. The enzyme catalyses [(1-&gt;4)-beta-D-xylan](n) + UDP-alpha-D-xylose = [(1-&gt;4)-beta-D-xylan](n+1) + UDP + H(+). Functionally, involved in the synthesis of the hemicellulose glucuronoxylan, a major component of secondary cell walls. Involved in the elongation of glucuronoxylan xylosyl backbone. Xylan xylosyltransferase that acts cooperatively with IRX9 to achieve the successive addition of xylosyl residues during xylan backbone elongation. Required for the proper composition and structural properties of released seed coat mucilage. Required for the production of highly branched xylan polymers in seed coat mucilage. Xylan with xylose side chains seems to be necessary for pectin attachment to the seed surface. Together with MUCI70, required for xylan and pectin synthesis in seed coat epidermal (SCE) cells. The chain is Beta-1,4-xylosyltransferase IRX14 from Arabidopsis thaliana (Mouse-ear cress).